Here is an 862-residue protein sequence, read N- to C-terminus: DNA mismatch repair protein MutS (862 aa).

604–611 (GPNMAGKS) provides a ligand contact to ATP.

The protein belongs to the DNA mismatch repair MutS family.

This protein is involved in the repair of mismatches in DNA. It is possible that it carries out the mismatch recognition step. This protein has a weak ATPase activity. The protein is DNA mismatch repair protein MutS of Brevibacillus brevis (strain 47 / JCM 6285 / NBRC 100599).